We begin with the raw amino-acid sequence, 135 residues long: Ribonuclease P protein component (135 aa).

Belongs to the RnpA family. As to quaternary structure, consists of a catalytic RNA component (M1 or rnpB) and a protein subunit.

It catalyses the reaction Endonucleolytic cleavage of RNA, removing 5'-extranucleotides from tRNA precursor.. RNaseP catalyzes the removal of the 5'-leader sequence from pre-tRNA to produce the mature 5'-terminus. It can also cleave other RNA substrates such as 4.5S RNA. The protein component plays an auxiliary but essential role in vivo by binding to the 5'-leader sequence and broadening the substrate specificity of the ribozyme. This chain is Ribonuclease P protein component, found in Xylella fastidiosa (strain Temecula1 / ATCC 700964).